The sequence spans 242 residues: Ras-like protein family member 11A (242 aa).

The segment at 17-241 (ESSSDYLLPK…SPKVKAPSAL (225 aa)) is small GTPase-like. GTP is bound by residues 34–41 (GAGRVGKS), 81–85 (DTPGG), and 147–150 (NKGD).

It belongs to the small GTPase superfamily. Ras family. As to quaternary structure, interacts with UBF/UBTF. In terms of tissue distribution, widely expressed. Down-regulated in prostate tumors compared to normal prostate tissue. High levels found in colon tumor and normal colon tissue followed by small intestine, liver, jejunum, ileum, bladder and aorta. Lowest levels observed in endothelial cells.

It is found in the nucleus. It localises to the nucleolus. It carries out the reaction GTP + H2O = GDP + phosphate + H(+). Functionally, regulator of rDNA transcription. Acts in cooperation UBF/UBTF and positively regulates RNA polymerase I transcription. The sequence is that of Ras-like protein family member 11A from Homo sapiens (Human).